Here is a 234-residue protein sequence, read N- to C-terminus: Phosphoribosylaminoimidazole-succinocarboxamide synthase (234 aa).

It belongs to the SAICAR synthetase family.

The catalysed reaction is 5-amino-1-(5-phospho-D-ribosyl)imidazole-4-carboxylate + L-aspartate + ATP = (2S)-2-[5-amino-1-(5-phospho-beta-D-ribosyl)imidazole-4-carboxamido]succinate + ADP + phosphate + 2 H(+). It participates in purine metabolism; IMP biosynthesis via de novo pathway; 5-amino-1-(5-phospho-D-ribosyl)imidazole-4-carboxamide from 5-amino-1-(5-phospho-D-ribosyl)imidazole-4-carboxylate: step 1/2. The polypeptide is Phosphoribosylaminoimidazole-succinocarboxamide synthase (Streptococcus agalactiae serotype III (strain NEM316)).